Consider the following 1024-residue polypeptide: Translation initiation factor IF-2 (1024 aa).

A disordered region spans residues 33–425 (SHMSSLEDDT…GRVKKTKTMK (393 aa)). 4 stretches are compositionally biased toward basic and acidic residues: residues 43–62 (EARVRESLHGMKNKQADTRV), 135–148 (TPEDPVVKATELKP), 167–198 (TPAKEEPTKAKEVPAAKEVPAAKEAPKVKETS), and 223–263 (SKPD…KEVR). Over residues 316–325 (EATQAPTSPQ) the composition is skewed to polar residues. Residues 332 to 350 (KPADKGPARAQAHRPDTGR) are compositionally biased toward basic and acidic residues. Residues 365 to 375 (RSKKKEWKKKG) show a composition bias toward basic residues. Positions 394 to 406 (SVVEGKDLYEKGR) are enriched in basic and acidic residues. Basic residues predominate over residues 407–423 (SGKKGRRKDGRVKKTKT). The tr-type G domain occupies 518-687 (SRPPVVTIMG…LLQSEVLELK (170 aa)). The segment at 527 to 534 (GHVDHGKT) is G1. 527-534 (GHVDHGKT) contacts GTP. Positions 552–556 (GITQH) are G2. Positions 573–576 (DTPG) are G3. GTP-binding positions include 573 to 577 (DTPGH) and 627 to 630 (NKMD). The G4 stretch occupies residues 627–630 (NKMD). The segment at 663 to 665 (SAK) is G5.

This sequence belongs to the TRAFAC class translation factor GTPase superfamily. Classic translation factor GTPase family. IF-2 subfamily.

The protein localises to the cytoplasm. In terms of biological role, one of the essential components for the initiation of protein synthesis. Protects formylmethionyl-tRNA from spontaneous hydrolysis and promotes its binding to the 30S ribosomal subunits. Also involved in the hydrolysis of GTP during the formation of the 70S ribosomal complex. This chain is Translation initiation factor IF-2, found in Desulforapulum autotrophicum (strain ATCC 43914 / DSM 3382 / VKM B-1955 / HRM2) (Desulfobacterium autotrophicum).